The sequence spans 198 residues: ATP-dependent Clp protease proteolytic subunit (198 aa).

The active-site Nucleophile is S98. The active site involves H123.

This sequence belongs to the peptidase S14 family. As to quaternary structure, fourteen ClpP subunits assemble into 2 heptameric rings which stack back to back to give a disk-like structure with a central cavity, resembling the structure of eukaryotic proteasomes.

It localises to the cytoplasm. The catalysed reaction is Hydrolysis of proteins to small peptides in the presence of ATP and magnesium. alpha-casein is the usual test substrate. In the absence of ATP, only oligopeptides shorter than five residues are hydrolyzed (such as succinyl-Leu-Tyr-|-NHMec, and Leu-Tyr-Leu-|-Tyr-Trp, in which cleavage of the -Tyr-|-Leu- and -Tyr-|-Trp bonds also occurs).. Cleaves peptides in various proteins in a process that requires ATP hydrolysis. Has a chymotrypsin-like activity. Plays a major role in the degradation of misfolded proteins. The protein is ATP-dependent Clp protease proteolytic subunit of Ehrlichia ruminantium (strain Gardel).